An 858-amino-acid chain; its full sequence is Large structural phosphoprotein (858 aa).

The interval 603 to 629 (DVSRGGKGNSRDLYSGGNAEKKETSGK) is disordered.

The protein belongs to the herpesviridae large structural phosphoprotein family. Homotetramer. Interacts with the major capsid protein. 180 tegument protein pU11 tetramers bind to the virion capsid. Post-translationally, phosphorylated at multiple sites.

It localises to the virion tegument. The chain is Large structural phosphoprotein (U11) from Homo sapiens (Human).